The sequence spans 475 residues: ADP-ribose glycohydrolase MACROD2 (475 aa).

A Macro domain is found at 59-240 (QEAPQMKKSL…IYKKKMNEFF (182 aa)). Substrate-binding positions include 77 to 79 (GDI), 90 to 92 (AAN), and 97 to 102 (GGGGVD). A Glycyl lysine isopeptide (Lys-Gly) (interchain with G-Cter in ubiquitin) cross-link involves residue K170. Residues 185 to 191 (ISTGIYG) and F224 contribute to the substrate site. Disordered stretches follow at residues 241–306 (PVDD…SQEA) and 324–475 (GVNT…EDLQ). 2 stretches are compositionally biased toward basic and acidic residues: residues 251–261 (ADMKEDSEGPE) and 335–359 (SEDK…DSDM). Residues 360–375 (TNHSVCDQELPNGQEN) are compositionally biased toward polar residues. Residues 376–386 (DSAKSEGKTEA) are compositionally biased toward basic and acidic residues. 2 stretches are compositionally biased toward polar residues: residues 387–402 (ESPS…SPNQ) and 440–469 (SQGS…PTES).

It belongs to the MacroD-type family. MacroD1/2-like subfamily. Interacts with ADP-ribosylated PARP1. Expressed in the kidney.

Its subcellular location is the nucleus. It catalyses the reaction 2''-O-acetyl-ADP-D-ribose + H2O = ADP-D-ribose + acetate + H(+). The enzyme catalyses 4-O-(ADP-D-ribosyl)-L-aspartyl-[protein] + H2O = L-aspartyl-[protein] + ADP-D-ribose + H(+). The catalysed reaction is 5-O-(ADP-D-ribosyl)-L-glutamyl-[protein] + H2O = L-glutamyl-[protein] + ADP-D-ribose + H(+). It carries out the reaction alpha-NAD(+) + H2O = ADP-D-ribose + nicotinamide + H(+). Subject to product inhibition by ADP-ribose. In terms of biological role, removes ADP-ribose from aspartate and glutamate residues in proteins bearing a single ADP-ribose moiety. Inactive towards proteins bearing poly-ADP-ribose. Deacetylates O-acetyl-ADP ribose, a signaling molecule generated by the deacetylation of acetylated lysine residues in histones and other proteins. The sequence is that of ADP-ribose glycohydrolase MACROD2 from Mus musculus (Mouse).